Reading from the N-terminus, the 125-residue chain is Large ribosomal subunit protein eL8 (125 aa).

This sequence belongs to the eukaryotic ribosomal protein eL8 family. Part of the 50S ribosomal subunit. Probably part of the RNase P complex.

Its subcellular location is the cytoplasm. Multifunctional RNA-binding protein that recognizes the K-turn motif in ribosomal RNA, the RNA component of RNase P, box H/ACA, box C/D and box C'/D' sRNAs. The protein is Large ribosomal subunit protein eL8 of Nanoarchaeum equitans (strain Kin4-M).